The sequence spans 261 residues: Cytochrome c oxidase subunit 3 (261 aa).

The Mitochondrial matrix segment spans residues 1–15 (MTHQTHAYHMVNPSP). The helical transmembrane segment at 16–34 (WPLTGALSALLMTSGLIMW) threads the bilayer. Residues 35 to 40 (FHFNST) are Mitochondrial intermembrane-facing. Residues 41–66 (ILLMLGLTTNMLTMYQWWRDIIREST) form a helical membrane-spanning segment. Topologically, residues 67–72 (FQGHHT) are mitochondrial matrix. A helical transmembrane segment spans residues 73-105 (PTVQKGLRYGMILFIISEVLFFTGFFWAFYHSS). The Mitochondrial intermembrane portion of the chain corresponds to 106 to 128 (LAPTPELGGCWPPTGIHPLNPLE). Residues 129–152 (VPLLNTSVLLASGVSITWAHHSLM) form a helical membrane-spanning segment. Residues 153–155 (EGN) lie on the Mitochondrial matrix side of the membrane. Residues 156–183 (RNHMLQALFITIALGVYFTLLQASEYYE) traverse the membrane as a helical segment. Residues 184 to 190 (APFTISD) are Mitochondrial intermembrane-facing. The helical transmembrane segment at 191–223 (GVYGSTFFVATGFHGLHVIIGSTFLIVCFFRQL) threads the bilayer. Residues 224–232 (KFHFTSSHH) lie on the Mitochondrial matrix side of the membrane. The helical transmembrane segment at 233–256 (FGFEAAAWYWHFVDVVWLFLYVSI) threads the bilayer. Residues 257–261 (YWWGS) lie on the Mitochondrial intermembrane side of the membrane.

The protein belongs to the cytochrome c oxidase subunit 3 family. As to quaternary structure, component of the cytochrome c oxidase (complex IV, CIV), a multisubunit enzyme composed of 14 subunits. The complex is composed of a catalytic core of 3 subunits MT-CO1, MT-CO2 and MT-CO3, encoded in the mitochondrial DNA, and 11 supernumerary subunits COX4I, COX5A, COX5B, COX6A, COX6B, COX6C, COX7A, COX7B, COX7C, COX8 and NDUFA4, which are encoded in the nuclear genome. The complex exists as a monomer or a dimer and forms supercomplexes (SCs) in the inner mitochondrial membrane with NADH-ubiquinone oxidoreductase (complex I, CI) and ubiquinol-cytochrome c oxidoreductase (cytochrome b-c1 complex, complex III, CIII), resulting in different assemblies (supercomplex SCI(1)III(2)IV(1) and megacomplex MCI(2)III(2)IV(2)).

The protein resides in the mitochondrion inner membrane. The catalysed reaction is 4 Fe(II)-[cytochrome c] + O2 + 8 H(+)(in) = 4 Fe(III)-[cytochrome c] + 2 H2O + 4 H(+)(out). In terms of biological role, component of the cytochrome c oxidase, the last enzyme in the mitochondrial electron transport chain which drives oxidative phosphorylation. The respiratory chain contains 3 multisubunit complexes succinate dehydrogenase (complex II, CII), ubiquinol-cytochrome c oxidoreductase (cytochrome b-c1 complex, complex III, CIII) and cytochrome c oxidase (complex IV, CIV), that cooperate to transfer electrons derived from NADH and succinate to molecular oxygen, creating an electrochemical gradient over the inner membrane that drives transmembrane transport and the ATP synthase. Cytochrome c oxidase is the component of the respiratory chain that catalyzes the reduction of oxygen to water. Electrons originating from reduced cytochrome c in the intermembrane space (IMS) are transferred via the dinuclear copper A center (CU(A)) of subunit 2 and heme A of subunit 1 to the active site in subunit 1, a binuclear center (BNC) formed by heme A3 and copper B (CU(B)). The BNC reduces molecular oxygen to 2 water molecules using 4 electrons from cytochrome c in the IMS and 4 protons from the mitochondrial matrix. This Aepyceros melampus (Impala) protein is Cytochrome c oxidase subunit 3 (MT-CO3).